The following is a 211-amino-acid chain: NADH-quinone oxidoreductase subunit I (211 aa).

Residues 1 to 27 (MANTDRPALPHKRAVPPSRADSGPRRR) form a disordered region. 2 4Fe-4S ferredoxin-type domains span residues 71–101 (LNRYPDGLEKCIGCELCAWACPADAIYVEGA) and 117–146 (RVYQINYLRCIGCGLCIEACPTRALTMTYD). [4Fe-4S] cluster is bound by residues cysteine 81, cysteine 84, cysteine 87, cysteine 91, cysteine 126, cysteine 129, cysteine 132, and cysteine 136.

This sequence belongs to the complex I 23 kDa subunit family. NDH-1 is composed of 14 different subunits. Subunits NuoA, H, J, K, L, M, N constitute the membrane sector of the complex. Requires [4Fe-4S] cluster as cofactor.

It localises to the cell membrane. The enzyme catalyses a quinone + NADH + 5 H(+)(in) = a quinol + NAD(+) + 4 H(+)(out). Its function is as follows. NDH-1 shuttles electrons from NADH, via FMN and iron-sulfur (Fe-S) centers, to quinones in the respiratory chain. The immediate electron acceptor for the enzyme in this species is believed to be menaquinone. Couples the redox reaction to proton translocation (for every two electrons transferred, four hydrogen ions are translocated across the cytoplasmic membrane), and thus conserves the redox energy in a proton gradient. The polypeptide is NADH-quinone oxidoreductase subunit I (Mycobacterium bovis (strain ATCC BAA-935 / AF2122/97)).